The chain runs to 209 residues: Nascent polypeptide-associated complex subunit alpha (209 aa).

Over residues Met1–Glu21 the composition is skewed to basic and acidic residues. 2 disordered regions span residues Met1–Asn51 and Gln121–Ile175. Over residues His22–Gly36 the composition is skewed to acidic residues. The 66-residue stretch at Asn49–Ala114 folds into the NAC-A/B domain. Basic and acidic residues predominate over residues Ala127–Asp150. The span at Lys151 to Asp166 shows a compositional bias: acidic residues. Residues Leu170–Ile209 enclose the UBA domain.

This sequence belongs to the NAC-alpha family. In terms of assembly, part of the nascent polypeptide-associated complex (NAC), consisting of EGD2 and EGD1. NAC associates with ribosomes via EGD1.

The protein resides in the cytoplasm. It is found in the nucleus. Functionally, component of the nascent polypeptide-associated complex (NAC), a dynamic component of the ribosomal exit tunnel, protecting the emerging polypeptides from interaction with other cytoplasmic proteins to ensure appropriate nascent protein targeting. The NAC complex also promotes mitochondrial protein import by enhancing productive ribosome interactions with the outer mitochondrial membrane and blocks the inappropriate interaction of ribosomes translating non-secretory nascent polypeptides with translocation sites in the membrane of the endoplasmic reticulum. EGD2 may also be involved in transcription regulation. The chain is Nascent polypeptide-associated complex subunit alpha (EGD2) from Gibberella zeae (strain ATCC MYA-4620 / CBS 123657 / FGSC 9075 / NRRL 31084 / PH-1) (Wheat head blight fungus).